The primary structure comprises 567 residues: 25S rRNA (cytosine-C(5))-methyltransferase NSUN5 (567 aa).

Residues 1-17 are compositionally biased toward basic residues; that stretch reads MVARRNKPKAPLVKHRF. A disordered region spans residues 1-88; the sequence is MVARRNKPKA…KTPPATKQKF (88 aa). S-adenosyl-L-methionine is bound by residues 312–318, glutamate 336, aspartate 363, and aspartate 383; that span reads CSAPGNK. The active-site Nucleophile is the cysteine 444.

The protein belongs to the class I-like SAM-binding methyltransferase superfamily. RsmB/NOP family.

The enzyme catalyses a cytidine in 25S rRNA + S-adenosyl-L-methionine = a 5-methylcytidine in 25S rRNA + S-adenosyl-L-homocysteine + H(+). Its function is as follows. S-adenosyl-L-methionine-dependent methyltransferase that specifically methylates the C(5) position of cytosine 2268 (m5C2268) in 25S rRNA. The protein is 25S rRNA (cytosine-C(5))-methyltransferase NSUN5 of Arabidopsis thaliana (Mouse-ear cress).